The chain runs to 271 residues: Purine nucleoside phosphorylase 1 (271 aa).

Phosphate-binding positions include serine 28, histidine 59, arginine 79–histidine 81, and alanine 111. At serine 28 the chain carries Phosphoserine. A purine D-ribonucleoside is bound at residue glutamate 191. Residue serine 210 coordinates phosphate. A purine D-ribonucleoside is bound at residue asparagine 233.

This sequence belongs to the PNP/MTAP phosphorylase family. As to quaternary structure, homotrimer.

The catalysed reaction is a purine 2'-deoxy-D-ribonucleoside + phosphate = a purine nucleobase + 2-deoxy-alpha-D-ribose 1-phosphate. Its pathway is purine metabolism; purine nucleoside salvage. Functionally, the purine nucleoside phosphorylases catalyze the phosphorolytic breakdown of the N-glycosidic bond in the beta-(deoxy)ribonucleoside molecules, with the formation of the corresponding free purine bases and pentose-1-phosphate. Cleaves guanosine, inosine, 2'-deoxyguanosine and 2'-deoxyinosine. This chain is Purine nucleoside phosphorylase 1 (punA), found in Bacillus subtilis (strain 168).